The following is a 304-amino-acid chain: Oxygen-dependent coproporphyrinogen-III oxidase (304 aa).

Residue S93 participates in substrate binding. Residues H97 and H107 each contribute to the a divalent metal cation site. Residue H107 is the Proton donor of the active site. 109-111 (NVR) serves as a coordination point for substrate. Positions 146 and 176 each coordinate a divalent metal cation. An important for dimerization region spans residues 241-276 (YVEFNLVYDRGTLFGLQSGGRTESILMSLPPQVRWG). 259-261 (GGR) serves as a coordination point for substrate.

This sequence belongs to the aerobic coproporphyrinogen-III oxidase family. Homodimer. The cofactor is a divalent metal cation.

The protein resides in the cytoplasm. It catalyses the reaction coproporphyrinogen III + O2 + 2 H(+) = protoporphyrinogen IX + 2 CO2 + 2 H2O. The protein operates within porphyrin-containing compound metabolism; protoporphyrin-IX biosynthesis; protoporphyrinogen-IX from coproporphyrinogen-III (O2 route): step 1/1. Involved in the heme biosynthesis. Catalyzes the aerobic oxidative decarboxylation of propionate groups of rings A and B of coproporphyrinogen-III to yield the vinyl groups in protoporphyrinogen-IX. The chain is Oxygen-dependent coproporphyrinogen-III oxidase from Pseudomonas savastanoi pv. phaseolicola (strain 1448A / Race 6) (Pseudomonas syringae pv. phaseolicola (strain 1448A / Race 6)).